The sequence spans 122 residues: Large ribosomal subunit protein uL14 (122 aa).

Belongs to the universal ribosomal protein uL14 family. Part of the 50S ribosomal subunit. Forms a cluster with proteins L3 and L19. In the 70S ribosome, L14 and L19 interact and together make contacts with the 16S rRNA in bridges B5 and B8.

Its function is as follows. Binds to 23S rRNA. Forms part of two intersubunit bridges in the 70S ribosome. This chain is Large ribosomal subunit protein uL14, found in Vesicomyosocius okutanii subsp. Calyptogena okutanii (strain HA).